The following is a 596-amino-acid chain: Arginine--tRNA ligase (596 aa).

The short motif at 135-145 is the 'HIGH' region element; the sequence is ANPTGPIHIGG. The tract at residues 227–249 is disordered; it reads PRVDGGADQDGNPLGEGDSEQRE.

Belongs to the class-I aminoacyl-tRNA synthetase family. Monomer.

It is found in the cytoplasm. The enzyme catalyses tRNA(Arg) + L-arginine + ATP = L-arginyl-tRNA(Arg) + AMP + diphosphate. This Bifidobacterium adolescentis (strain ATCC 15703 / DSM 20083 / NCTC 11814 / E194a) protein is Arginine--tRNA ligase.